The following is a 505-amino-acid chain: MKKKLVLIIIDGLGLRLESQGNGFALAKTPVFDRLFQEYPNSLIAASGQEVGLPEGQMGNSEVGHLNIGAGFVVYTGISIINNALKTGKFFENEKFILAFRHSIKTGFPLQIMGLFSPGGVHSHQDHLFALIDFAANFGVKKLNLHLFGDGRDVGPKSIKPWIKMLNLKLKNYENYKIASISGRFYSMDRDKMFDRVELGYNALLGKAENTFTDPIDYINFQYEKGVSDEFFEPAINLKVNKKDFLADDHPVIFFNFRPDRARQLSHLILQTDLYEQKPKNPIKTDVFVSMMKYEGINCLVAFEEMRVENPLGKLISMAGFRQLRLAETQKYAHVTFFVDGGVELELENSDRILIDSLKVQSYADFPQMSAVEITDKLLEVGQNYDFIIMNFANPDMVGHTGDLKATIKAVEILDFQIGRICKWAEEKNFDFFITADHGNAELTEDENGNPSTKHTTFPVMLISSDKTIKLKSGKLANIAPTILDYLGLDKHPDMDHDSLIIKDK.

Asp-11 and Ser-61 together coordinate Mn(2+). Ser-61 acts as the Phosphoserine intermediate in catalysis. Residues His-122, 152–153 (RD), Arg-184, Arg-190, 258–261 (RPDR), and Lys-331 each bind substrate. Residues Asp-396, His-400, Asp-437, His-438, and His-455 each coordinate Mn(2+).

It belongs to the BPG-independent phosphoglycerate mutase family. As to quaternary structure, monomer. The cofactor is Mn(2+).

The enzyme catalyses (2R)-2-phosphoglycerate = (2R)-3-phosphoglycerate. Its pathway is carbohydrate degradation; glycolysis; pyruvate from D-glyceraldehyde 3-phosphate: step 3/5. Catalyzes the interconversion of 2-phosphoglycerate and 3-phosphoglycerate. The protein is 2,3-bisphosphoglycerate-independent phosphoglycerate mutase of Mesomycoplasma hyopneumoniae (strain 7448) (Mycoplasma hyopneumoniae).